Reading from the N-terminus, the 189-residue chain is Fine tangled pili major subunit (189 aa).

The protein belongs to the Dps family. Hexamer.

The protein resides in the fimbrium. May contribute to bacterial adherence, or be involved in the protection of the bacteria, or both. The chain is Fine tangled pili major subunit (ftpA) from Haemophilus ducreyi (strain 35000HP / ATCC 700724).